Here is a 68-residue protein sequence, read N- to C-terminus: MAVQQNKVSKSRRNNRRAHDALVAANPNECSNCGELRRPHHVCPSCGHYDDKEIVAQADEIDLDEDAA.

Residues 1–20 (MAVQQNKVSKSRRNNRRAHD) form a disordered region.

It belongs to the bacterial ribosomal protein bL32 family.

The polypeptide is Large ribosomal subunit protein bL32 (Ruegeria sp. (strain TM1040) (Silicibacter sp.)).